Reading from the N-terminus, the 187-residue chain is Phospholipase A2-gamma (187 aa).

Residues 1–25 form the signal peptide; the sequence is MITGLALSRVAFGLTAFLLLAVVSS. Disulfide bonds link cysteine 29-cysteine 56, cysteine 33-cysteine 62, cysteine 38-cysteine 115, cysteine 49-cysteine 69, cysteine 68-cysteine 93, and cysteine 75-cysteine 86. Ca(2+)-binding residues include tyrosine 48, glycine 50, and tyrosine 53. The active site involves histidine 72. Aspartate 73 provides a ligand contact to Ca(2+).

It belongs to the phospholipase A2 family. Ca(2+) is required as a cofactor. In terms of tissue distribution, strongly expressed in mature flowers but weakly expressed in other tissues. Detected in buds, open flowers and in pollen.

It is found in the secreted. It localises to the golgi apparatus. The protein localises to the trans-Golgi network. The protein resides in the endoplasmic reticulum. The enzyme catalyses a 1,2-diacyl-sn-glycero-3-phosphocholine + H2O = a 1-acyl-sn-glycero-3-phosphocholine + a fatty acid + H(+). Functionally, PA2 catalyzes the calcium-dependent hydrolysis of the 2-acyl groups in 3-sn-phosphoglycerides. Releases lysophospholipids (LPLs) and free fatty acids (FFAs) from membrane phospholipids in response to hormones and other external stimuli. Plays a role in pollen development and germination and tube growth. This Arabidopsis thaliana (Mouse-ear cress) protein is Phospholipase A2-gamma (PLA2-GAMMA).